A 215-amino-acid polypeptide reads, in one-letter code: MPAFNRLFPLVSLVLIYWASVCFPVCVEVPSETEAVQGNPMKLRCISCMKREEVEATTVVEWFYRPEGGKDFLIYEYRNGHQEVESPFQGRLQWNGSKDLQDVSITVLNVTLNDSGLYTCNVSREFEFEAHRPFVKTTRLIPLRVTEEAGEDFTSVVSEIMMYILLVFLTLWLLIEMIYCYRKVSKAEEAAQENASDYLAIPSENKENSAVPVEE.

Residues 1-22 (MPAFNRLFPLVSLVLIYWASVC) form the signal peptide. Residues 23-156 (FPVCVEVPSE…EEAGEDFTSV (134 aa)) are Extracellular-facing. The Ig-like C2-type domain maps to 24–138 (PVCVEVPSET…EAHRPFVKTT (115 aa)). Cystine bridges form between C26–C48 and C45–C120. Residues N95, N109, N113, and N121 are each glycosylated (N-linked (GlcNAc...) asparagine). The chain crosses the membrane as a helical span at residues 157 to 178 (VSEIMMYILLVFLTLWLLIEMI). The Cytoplasmic portion of the chain corresponds to 179-215 (YCYRKVSKAEEAAQENASDYLAIPSENKENSAVPVEE).

This sequence belongs to the sodium channel auxiliary subunit SCN3B (TC 8.A.17) family. As to quaternary structure, a voltage-gated sodium (Nav) channel consists of an ion-conducting pore-forming alpha subunit functional on its own that is regulated by one or more beta subunits. Forms homodimers and homotrimers. SCN3B is non-covalently associated with alpha subunits and induces the formation of alpha subunit oligomers, including trimers. Interacts with SCN5A/Nav1.5; regulatory subunit of SCN5A/Nav1.5. Interacts with SCN7A/Nav2.1; probable regulatory subunit of SCN7A/Nav2.1. Interacts with SCN10A; regulatory subunit of SCN10A/Nav1.8. Interacts with NFASC; probably involved in targeting the sodium channels to the nodes of Ranvier. In terms of processing, intramolecular disulfide bonds favor the voltage-gated sodium channel oligomeric complex assembly. N-glycosylated.

The protein resides in the cell membrane. Regulatory subunit of multiple voltage-gated sodium (Nav) channels directly mediating the depolarization of excitable membranes. Navs, also called VGSCs (voltage-gated sodium channels) or VDSCs (voltage-dependent sodium channels), operate by switching between closed and open conformations depending on the voltage difference across the membrane. In the open conformation they allow Na(+) ions to selectively pass through the pore, along their electrochemical gradient. The influx of Na+ ions provokes membrane depolarization, initiating the propagation of electrical signals throughout cells and tissues. The accessory beta subunits participate in localization and functional modulation of the Nav channels. Modulates the activity of SCN2A/Nav1.2, causing a hyperpolarizing shift in the voltage-dependence of inactivation of the channel and increasing the fraction of channels operating in the fast gating mode. Modulates the activity of SCN5A/Nav1.5. Could also regulate the atypical sodium channel SCN7A/Nav2.1. Modulates the activity of SCN10A/Nav1.8, regulating its oligomerization and accelerating the recovery from inactivation. This is Sodium channel regulatory subunit beta-3 from Macaca fascicularis (Crab-eating macaque).